A 430-amino-acid polypeptide reads, in one-letter code: UDP-N-acetylglucosamine 1-carboxyvinyltransferase 1 (430 aa).

Position 22–23 (22–23 (KN)) interacts with phosphoenolpyruvate. Arginine 93 contributes to the UDP-N-acetyl-alpha-D-glucosamine binding site. Cysteine 117 (proton donor) is an active-site residue. A 2-(S-cysteinyl)pyruvic acid O-phosphothioketal modification is found at cysteine 117. UDP-N-acetyl-alpha-D-glucosamine-binding positions include 122 to 126 (RPVDL), aspartate 305, and valine 327.

Belongs to the EPSP synthase family. MurA subfamily.

The protein resides in the cytoplasm. The enzyme catalyses phosphoenolpyruvate + UDP-N-acetyl-alpha-D-glucosamine = UDP-N-acetyl-3-O-(1-carboxyvinyl)-alpha-D-glucosamine + phosphate. It participates in cell wall biogenesis; peptidoglycan biosynthesis. Cell wall formation. Adds enolpyruvyl to UDP-N-acetylglucosamine. This chain is UDP-N-acetylglucosamine 1-carboxyvinyltransferase 1, found in Listeria innocua serovar 6a (strain ATCC BAA-680 / CLIP 11262).